The sequence spans 262 residues: Hydroxyethylthiazole kinase (262 aa).

Methionine 44 contacts substrate. ATP-binding residues include arginine 118 and serine 166. Position 193 (glycine 193) interacts with substrate.

The protein belongs to the Thz kinase family. Mg(2+) serves as cofactor.

The enzyme catalyses 5-(2-hydroxyethyl)-4-methylthiazole + ATP = 4-methyl-5-(2-phosphooxyethyl)-thiazole + ADP + H(+). It functions in the pathway cofactor biosynthesis; thiamine diphosphate biosynthesis; 4-methyl-5-(2-phosphoethyl)-thiazole from 5-(2-hydroxyethyl)-4-methylthiazole: step 1/1. Its function is as follows. Catalyzes the phosphorylation of the hydroxyl group of 4-methyl-5-beta-hydroxyethylthiazole (THZ). This is Hydroxyethylthiazole kinase from Chlamydia abortus (strain DSM 27085 / S26/3) (Chlamydophila abortus).